We begin with the raw amino-acid sequence, 199 residues long: uncharacterized protein (199 aa).

Residues 1-30 form a disordered region; the sequence is MEDAAAPGRTEGVLERQGAPPAAGQGGALV. A coiled-coil region spans residues 71–101; the sequence is RANATNKLTVIAEQIQHLQEQARKVLEDAHR.

This is an uncharacterized protein from Homo sapiens (Human).